Consider the following 258-residue polypeptide: U6 snRNA phosphodiesterase 1 (258 aa).

Positions 1–20 are disordered; that stretch reads MALVDYGGSSSSASEDEDCT. His117 acts as the Proton acceptor in catalysis. Residues 117–119, Tyr200, and 202–208 each bind AMP; these read HLS and PASFHVS. UMP contacts are provided by residues Tyr200 and 204–208; that span reads SFHVS. His206 (proton donor) is an active-site residue.

It belongs to the 2H phosphoesterase superfamily. USB1 family.

It is found in the nucleus. The enzyme catalyses a 3'-end uridylyl-uridine-RNA = a 3'-end 2',3'-cyclophospho-uridine-RNA + uridine. 3'-5' RNA exonuclease that trims the 3' end of oligo(U) tracts of the pre-U6 small nuclear RNA (snRNA) molecule, leading to the formation of a mature U6 snRNA 3' end-terminated with a 2',3'-cyclic phosphate. Participates in the U6 snRNA 3' end processing that prevents U6 snRNA degradation. The protein is U6 snRNA phosphodiesterase 1 of Drosophila melanogaster (Fruit fly).